The primary structure comprises 125 residues: Glycine cleavage system H protein (125 aa).

The Lipoyl-binding domain maps to 21-103; that stretch reads SVTIGISNQA…YSAGWIVKIK (83 aa). Residue Lys62 is modified to N6-lipoyllysine.

The protein belongs to the GcvH family. The glycine cleavage system is composed of four proteins: P, T, L and H. Requires (R)-lipoate as cofactor.

In terms of biological role, the glycine cleavage system catalyzes the degradation of glycine. The H protein shuttles the methylamine group of glycine from the P protein to the T protein. The polypeptide is Glycine cleavage system H protein (Psychromonas ingrahamii (strain DSM 17664 / CCUG 51855 / 37)).